The chain runs to 628 residues: DEAD-box ATP-dependent RNA helicase 9 (628 aa).

The Q motif motif lies at 98-126 (LEVAKLGISPKIVSQLASRGITKLFPIQR). In terms of domain architecture, Helicase ATP-binding spans 129–302 (LEPAMQGKDM…QKYLKNPVTI (174 aa)). 142–149 (AKTGTGKT) lines the ATP pocket. Positions 250 to 253 (DEAD) match the DEAD box motif. The region spanning 331–478 (VLGELIKEHA…KINVEGSDLM (148 aa)) is the Helicase C-terminal domain. Disordered stretches follow at residues 496-548 (GSYG…SGFG) and 571-628 (SGFG…FGSS). Residues 500-509 (RRGSFGSSSS) show a composition bias toward low complexity. Residues 510–548 (RGGGFGDSGFGRSGGGFGRSGGGGFGRSSGGGFGDSGFG) are compositionally biased toward gly residues.

Belongs to the DEAD box helicase family. DDX21/DDX50 subfamily.

The enzyme catalyses ATP + H2O = ADP + phosphate + H(+). The polypeptide is DEAD-box ATP-dependent RNA helicase 9 (Oryza sativa subsp. japonica (Rice)).